Reading from the N-terminus, the 232-residue chain is Replicative helicase loading/DNA remodeling protein DnaD (232 aa).

Positions 1-98 (MKKQQFIDMQ…QNGIKFEKYS (98 aa)) are N-terminal domain. Positions 1–116 (MKKQQFIDMQ…YEYIQLAQNQ (116 aa)) are DDBH1. Residues 99 to 205 (LQPLWGKLYE…VEQAKIHSQK (107 aa)) are C-terminal domain. The segment at 131 to 200 (TIFEEEFARP…NGLKTVEQAK (70 aa)) is DDBH2. Residues 206 to 232 (FRRVQAKQNEPQKEYKRQVPFYNWLEQ) form a C-terminal tail region.

The protein belongs to the DnaB/DnaD family. In terms of assembly, the DNA replisome assembles sequentially on oriC in this order; DnaA, DnaD, DnaB, DnaI-DnaC helicase. Homodimer. Homotetramer. Oligomerization in vitro is concentration dependent. Part of the replication restart primosome which assembles in this order; PriA, DnaD then DnaB. The preferred DNA substrate mimics an arrested DNA replication fork with unreplicated lagging strand. Interacts with DnaA, DnaB and PriA. Interaction with DnaB requires DnaD to dimerize.

The protein resides in the cytoplasm. With respect to regulation, recruitment to oriC requires DnaA but not DnaB, DnaC or DnaI and is blocked by SirA. In terms of biological role, required to load replicative helicase DnaC onto replication forks. Binds to a DnaD recognition element (DRE) which has pairs of 5'-TnnT-3' motifs; there is a strong DRE at oriC opposite the DnaA-trios recognized by DnaA. During DNA replication from the origin of replication (oriC) in the DNA replisome, DnaD is required after DnaA, before DnaB and subsequent helicase DnaC loading. A component of the replication restart primosome, which reloads the replicative helicase on sites other than oriC. DnaB, DnaD and DnaI may also be required for a PriA-independent pathway of replication fork restart. DnaB and DnaD work together to allow DnaB access to single-stranded (ss)DNA. Has DNA remodeling activity that converts supercoiled plasmid into an open circular form; DnaD forms scaffolds inside the plasmid DNA. Plasmid relaxation incorporates both wrapping around the DnaD protein scaffold and simultaneous untwisting, no nicking of the DNA is seen. Also converts linear DNA into an open circular form. Disrupts a replicative helicase-DnaI complex. Inhibits the ability of DnaA-ATP to form a helix on DNA; does not disassemble preformed helices in vitro. Binds ssDNA, and replication fork-like substrates, supercoiled plasmid, but not stably to short double-stranded (ds)DNA. DnaD stimulates DnaB DNA-binding activities. DnaB and DnaD are required to load helicase on the repN plasmid origin of replication (oriN). Causes a severe growth defect upon overexpression even in an oriC-independent strain. In Bacillus subtilis (strain 168), this protein is Replicative helicase loading/DNA remodeling protein DnaD.